The sequence spans 487 residues: MASSAEGDEGTVVALAGVLQSGFQELSLNKLATSLGASEQALRLIISIFLGYPFALFYRHYLFYKETYLIHLFHTFTGLSIAYFNFGNQLYHSLLCIVLQFLILRLMGRTITAVLTTFCFQMAYLLAGYYYTATGNYDIKWTMPHCVLTLKLIGLAVDYFDGGKDQNSLSSEQQKYAIRGVPSLLEVAGFSYFYGAFLVGPQFSMNHYMKLVQGELIDIPGKIPNSIIPALKRLSLGLFYLVGYTLLSPHITEDYLLTEDYDNHPFWFRCMYMLIWGKFVLYKYVTCWLVTEGVCILTGLGFNGFEEKGKAKWDACANMKVWLFETNPRFTGTIASFNINTNAWVARYIFKRLKFLGNKELSQGLSLLFLALWHGLHSGYLVCFQMEFLIVIVERQAARLIQESPTLSKLAAITVLQPFYYLVQQTIHWLFMGYSMTAFCLFTWDKWLKVYKSIYFLGHIFFLSLLFILPYIHKAMVPRKEKLKKME.

Residue A2 is modified to N-acetylalanine. Transmembrane regions (helical) follow at residues 44 to 64 (LIISIFLGYPFALFYRHYLFY), 84 to 104 (FNFGNQLYHSLLCIVLQFLIL), 111 to 131 (ITAVLTTFCFQMAYLLAGYYY), 180 to 200 (GVPSLLEVAGFSYFYGAFLVG), 227 to 247 (IIPALKRLSLGLFYLVGYTLL), and 285 to 305 (VTCWLVTEGVCILTGLGFNGF). Catalysis depends on residues N338 and H374. 3 consecutive transmembrane segments (helical) span residues 364–384 (GLSLLFLALWHGLHSGYLVCF), 422–442 (LVQQTIHWLFMGYSMTAFCLF), and 453–473 (SIYFLGHIFFLSLLFILPYIH). Positions 484 to 487 (KKME) match the Di-lysine motif motif.

The protein belongs to the membrane-bound acyltransferase family. As to expression, highly expressed in liver, pancreas and adipose tissue. Very low expression in skeletal muscle and heart. Detected in neutrophils.

It localises to the endoplasmic reticulum membrane. It carries out the reaction a 1-acyl-sn-glycero-3-phosphocholine + an acyl-CoA = a 1,2-diacyl-sn-glycero-3-phosphocholine + CoA. The catalysed reaction is a 1-acyl-sn-glycero-3-phosphoethanolamine + an acyl-CoA = a 1,2-diacyl-sn-glycero-3-phosphoethanolamine + CoA. It catalyses the reaction a 1-acyl-sn-glycero-3-phospho-L-serine + an acyl-CoA = a 1,2-diacyl-sn-glycero-3-phospho-L-serine + CoA. The enzyme catalyses (9Z,12Z)-octadecadienoyl-CoA + a 1-acyl-sn-glycero-3-phosphocholine = 1-acyl-2-(9Z,12Z)-octadecadienoyl-sn-glycero-3-phosphocholine + CoA. It carries out the reaction (5Z,8Z,11Z,14Z)-eicosatetraenoyl-CoA + a 1-acyl-sn-glycero-3-phosphocholine = 1-acyl-2-(5Z,8Z,11Z,14Z-eicosatetraenoyl)-sn-glycero-3-phosphocholine + CoA. The catalysed reaction is dodecanoyl-CoA + 1-hexadecanoyl-sn-glycero-3-phosphocholine = 1-hexadecanoyl-2-dodecanoyl-sn-glycero-3-phosphocholine + CoA. It catalyses the reaction octadecanoyl-CoA + 1-hexadecanoyl-sn-glycero-3-phosphocholine = 1-hexadecanoyl-2-octadecanoyl-sn-glycero-3-phosphocholine + CoA. The enzyme catalyses 1-dodecanoyl-sn-glycero-3-phosphocholine + hexadecanoyl-CoA = 1-dodecanoyl-2-hexadecanoyl-sn-glycero-3-phosphocholine + CoA. It carries out the reaction 1-tetradecanoyl-sn-glycero-3-phosphocholine + hexadecanoyl-CoA = 1-tetradecanoyl-2-hexadecanoyl-sn-glycero-3-phosphocholine + CoA. The catalysed reaction is 1-hexadecanoyl-sn-glycero-3-phosphocholine + hexadecanoyl-CoA = 1,2-dihexadecanoyl-sn-glycero-3-phosphocholine + CoA. It catalyses the reaction 1-octadecanoyl-sn-glycero-3-phosphocholine + hexadecanoyl-CoA = 1-octadecanoyl-2-hexadecanoyl-sn-glycero-3-phosphocholine + CoA. The enzyme catalyses 1-(9Z-octadecenoyl)-sn-glycero-3-phosphocholine + hexadecanoyl-CoA = 1-(9Z-octadecenoyl)-2-hexadecanoyl-sn-glycero-3-phosphocholine + CoA. It carries out the reaction (9Z)-hexadecenoyl-CoA + 1-hexadecanoyl-sn-glycero-3-phosphocholine = 1-hexadecanoyl-2-(9Z-hexadecenoyl)-sn-glycero-3-phosphocholine + CoA. The catalysed reaction is 1-hexadecanoyl-sn-glycero-3-phosphocholine + (9Z)-octadecenoyl-CoA = 1-hexadecanoyl-2-(9Z-octadecenoyl)-sn-glycero-3-phosphocholine + CoA. It catalyses the reaction (9Z,12Z)-octadecadienoyl-CoA + 1-hexadecanoyl-sn-glycero-3-phosphocholine = 1-hexadecanoyl-2-(9Z,12Z-octadecadienoyl)-sn-glycero-3-phosphocholine + CoA. The enzyme catalyses 1-dodecanoyl-sn-glycero-3-phosphocholine + (5Z,8Z,11Z,14Z)-eicosatetraenoyl-CoA = 1-dodecanoyl-2-(5Z,8Z,11Z,14Z)-eicosatetraenoyl-sn-glycero-3-phosphocholine + CoA. It carries out the reaction (5Z,8Z,11Z,14Z)-eicosatetraenoyl-CoA + 1-hexadecanoyl-sn-glycero-3-phosphocholine = 1-hexadecanoyl-2-(5Z,8Z,11Z,14Z-eicosatetraenoyl)-sn-glycero-3-phosphocholine + CoA. The catalysed reaction is 1-octadecanoyl-sn-glycero-3-phosphocholine + (5Z,8Z,11Z,14Z)-eicosatetraenoyl-CoA = 1-octadecanoyl-2-(5Z,8Z,11Z,14Z-eicosatetraenoyl)-sn-glycero-3-phosphocholine + CoA. It catalyses the reaction 1-eicosanoyl-sn-glycero-3-phosphocholine + (5Z,8Z,11Z,14Z)-eicosatetraenoyl-CoA = 1-eicosanoyl-2-(5Z,8Z,11Z,14Z)-eicosatetraenoyl-sn-glycero-3-phosphocholine + CoA. The enzyme catalyses 1-(9Z-octadecenoyl)-sn-glycero-3-phosphocholine + (9Z)-octadecenoyl-CoA = 1,2-di-(9Z-octadecenoyl)-sn-glycero-3-phosphocholine + CoA. It carries out the reaction 1-(9Z-octadecenoyl)-sn-glycero-3-phosphocholine + (9Z,12Z)-octadecadienoyl-CoA = 1-(9Z)-octadecenoyl-2-(9Z,12Z)-octadecadienoyl-sn-glycero-3-phosphocholine + CoA. The catalysed reaction is 1-(9Z-octadecenoyl)-sn-glycero-3-phosphocholine + (5Z,8Z,11Z,14Z)-eicosatetraenoyl-CoA = 1-(9Z)-octadecenoyl-2-(5Z,8Z,11Z,14Z)-icosatetraenoyl-sn-glycero-3-phosphocholine + CoA. It catalyses the reaction a 1-acyl-sn-glycero-3-phosphoethanolamine + (9Z,12Z)-octadecadienoyl-CoA = 1-acyl-2-(9Z,12Z)-octadecadienoyl-sn-glycero-3-phosphoethanolamine + CoA. The enzyme catalyses 1-(9Z-octadecenoyl)-sn-glycero-3-phosphoethanolamine + (9Z,12Z)-octadecadienoyl-CoA = 1-(9Z)-octadecenoyl-2-(9Z,12Z)-octadecadienoyl-sn-glycero-3-phosphoethanolamine + CoA. It carries out the reaction 1-(10Z-heptadecenoyl)-sn-glycero-3-phosphoethanolamine + (9Z,12Z)-octadecadienoyl-CoA = 1-(10Z-heptadecenoyl)-2-(9Z,12Z-octadecadienoyl)-sn-glycero-3-phosphoethanolamine + CoA. The catalysed reaction is a 1-acyl-sn-glycero-3-phosphoethanolamine + (5Z,8Z,11Z,14Z)-eicosatetraenoyl-CoA = 1-acyl-2-(5Z,8Z,11Z,14Z)-eicosatetraenoyl-sn-glycero-3-phosphoethanolamine + CoA. It catalyses the reaction 1-hexadecanoyl-sn-glycero-3-phosphoethanolamine + (5Z,8Z,11Z,14Z)-eicosatetraenoyl-CoA = 1-hexadecanoyl-2-(5Z,8Z,11Z,14Z-eicosatetraenoyl)-sn-glycero-3-phosphoethanolamine + CoA. The enzyme catalyses 1-(9Z-octadecenoyl)-sn-glycero-3-phosphoethanolamine + (5Z,8Z,11Z,14Z)-eicosatetraenoyl-CoA = 1-(9Z)-octadecenoyl-2-(5Z,8Z,11Z,14Z)-eicosatetraenoyl-sn-glycero-3-phosphoethanolamine + CoA. It carries out the reaction 1-(10Z-heptadecenoyl)-sn-glycero-3-phosphoethanolamine + (5Z,8Z,11Z,14Z)-eicosatetraenoyl-CoA = 1-(10Z-heptadecenoyl)-2-(5Z,8Z,11Z,14Z-eicosatetraenoyl)-sn-glycero-3-phosphoethanolamine + CoA. The catalysed reaction is a 1-O-(1Z-alkenyl)-sn-glycero-3-phosphoethanolamine + (5Z,8Z,11Z,14Z)-eicosatetraenoyl-CoA = 1-O-(1Z)-alkenyl-2-(5Z,8Z,11Z,14Z)-eicosatetraenoyl-sn-glycero-3-phosphoethanolamine + CoA. It catalyses the reaction a 1-acyl-sn-glycero-3-phospho-L-serine + (9Z,12Z)-octadecadienoyl-CoA = 1-acyl-2-(9Z,12Z-octadecadienoyl)-sn-glycero-3-phospho-L-serine + CoA. The enzyme catalyses a 1-acyl-sn-glycero-3-phospho-L-serine + (5Z,8Z,11Z,14Z)-eicosatetraenoyl-CoA = 1-acyl-2-(5Z,8Z,11Z,14Z-eicosatetraenoyl)-sn-glycero-3-phospho-L-serine + CoA. It carries out the reaction 1-hexadecanoyl-sn-glycero-3-phospho-L-serine + (9Z)-octadecenoyl-CoA = 1-hexadecanoyl-2-(9Z-octadecenoyl)-sn-glycero-3-phospho-L-serine + CoA. The catalysed reaction is 1-(9Z-octadecenoyl)-sn-glycero-3-phospho-L-serine + (9Z)-octadecenoyl-CoA = 1,2-di-(9Z)-octadecenoyl-sn-glycero-3-phospho-L-serine + CoA. It catalyses the reaction 1-hexadecanoyl-sn-glycero-3-phospho-L-serine + (9Z,12Z)-octadecadienoyl-CoA = 1-hexadecanoyl-2-(9Z,12Z-octadecadienoyl)-sn-glycero-3-phospho-L-serine + CoA. The enzyme catalyses 1-(9Z-octadecenoyl)-sn-glycero-3-phospho-L-serine + (9Z,12Z)-octadecadienoyl-CoA = 1-(9Z-octadecenoyl)-2-(9Z,12Z-octadienoyl)-sn-glycero-3-phospho-L-serine + CoA. It carries out the reaction 1-hexadecanoyl-sn-glycero-3-phospho-L-serine + (5Z,8Z,11Z,14Z)-eicosatetraenoyl-CoA = 1-hexadecanoyl-2-(5Z,8Z,11Z,14Z-eicosatetraenoyl)-sn-glycero-3-phospho-L-serine + CoA. The catalysed reaction is 1-(9Z-octadecenoyl)-sn-glycero-3-phospho-L-serine + (5Z,8Z,11Z,14Z)-eicosatetraenoyl-CoA = 1-(9Z-octadecenoyl)-2-(5Z,8Z,11Z,14Z-eicosatetraenoyl)-sn-glycero-3-phospho-L-serine + CoA. It functions in the pathway lipid metabolism; phospholipid metabolism. Its activity is regulated as follows. Activity is inhibited by thimerosal. In terms of biological role, lysophospholipid O-acyltransferase (LPLAT) that catalyzes the reacylation step of the phospholipid remodeling process also known as the Lands cycle. Catalyzes transfer of the fatty acyl chain from fatty acyl-CoA to 1-acyl lysophospholipid to form various classes of phospholipids. Converts 1-acyl lysophosphatidylcholine (LPC) into phosphatidylcholine (PC) (LPCAT activity), 1-acyl lysophosphatidylserine (LPS) into phosphatidylserine (PS) (LPSAT activity) and 1-acyl lysophosphatidylethanolamine (LPE) into phosphatidylethanolamine (PE) (LPEAT activity). Favors polyunsaturated fatty acyl-CoAs as acyl donors compared to saturated fatty acyl-CoAs. Has higher activity for LPC acyl acceptors compared to LPEs and LPSs. Can also transfer the fatty acyl chain from fatty acyl-CoA to 1-O-alkyl lysophospholipid or 1-O-alkenyl lysophospholipid with lower efficiency. Acts as a major LPC O-acyltransferase in liver and intestine. As a component of the liver X receptor/NR1H3 or NR1H2 signaling pathway, mainly catalyzes the incorporation of arachidonate into PCs of endoplasmic reticulum (ER) membranes, increasing membrane dynamics and enabling triacylglycerols transfer to nascent very low-density lipoprotein (VLDL) particles. Promotes processing of sterol regulatory protein SREBF1 in hepatocytes, likely by facilitating the translocation of SREBF1-SCAP complex from ER to the Golgi apparatus. Participates in mechanisms by which the liver X receptor/NR1H3 or NR1H2 signaling pathway counteracts lipid-induced ER stress response and inflammation. Down-regulates hepatic inflammation by limiting arachidonic acid availability for synthesis of inflammatory eicosanoids, such as prostaglandins. In enterocytes, acts as a component of a gut-brain feedback loop that coordinates dietary lipid absorption and food intake. Regulates the abundance of PCs containing linoleate and arachidonate in enterocyte membranes, enabling passive diffusion of fatty acids and cholesterol across the membrane for efficient chylomicron assembly. In the intestinal crypt, acts as a component of dietary-responsive phospholipid-cholesterol axis, regulating the biosynthesis of cholesterol and its mitogenic effects on intestinal stem cells. The sequence is that of Lysophospholipid acyltransferase 5 (LPCAT3) from Homo sapiens (Human).